Reading from the N-terminus, the 435-residue chain is Gamma-glutamyl phosphate reductase (435 aa).

This sequence belongs to the gamma-glutamyl phosphate reductase family.

Its subcellular location is the cytoplasm. The enzyme catalyses L-glutamate 5-semialdehyde + phosphate + NADP(+) = L-glutamyl 5-phosphate + NADPH + H(+). It participates in amino-acid biosynthesis; L-proline biosynthesis; L-glutamate 5-semialdehyde from L-glutamate: step 2/2. In terms of biological role, catalyzes the NADPH-dependent reduction of L-glutamate 5-phosphate into L-glutamate 5-semialdehyde and phosphate. The product spontaneously undergoes cyclization to form 1-pyrroline-5-carboxylate. The protein is Gamma-glutamyl phosphate reductase of Synechococcus sp. (strain CC9605).